The primary structure comprises 681 residues: Methionine--tRNA ligase (681 aa).

Residues 15-25 carry the 'HIGH' region motif; it reads PYANGPIHLGH. Cys146, Cys149, Cys159, and Cys162 together coordinate Zn(2+). Residues 332–336 carry the 'KMSKS' region motif; it reads KMSKS. Lys335 is a binding site for ATP. The tract at residues 547–569 is disordered; it reads DNMAQAPKDNGKAKKDKKEAKSE. Residues 555-569 show a composition bias toward basic and acidic residues; the sequence is DNGKAKKDKKEAKSE. A tRNA-binding domain is found at 580-681; that stretch reads DFAKIDLRIA…SGAQPGMQVK (102 aa).

This sequence belongs to the class-I aminoacyl-tRNA synthetase family. MetG type 1 subfamily. As to quaternary structure, homodimer. Zn(2+) serves as cofactor.

It localises to the cytoplasm. It catalyses the reaction tRNA(Met) + L-methionine + ATP = L-methionyl-tRNA(Met) + AMP + diphosphate. Functionally, is required not only for elongation of protein synthesis but also for the initiation of all mRNA translation through initiator tRNA(fMet) aminoacylation. The protein is Methionine--tRNA ligase of Hahella chejuensis (strain KCTC 2396).